Here is a 106-residue protein sequence, read N- to C-terminus: Testis-specific basic protein Y 2 (106 aa).

Belongs to the VCX/VCY family. In terms of assembly, interacts with MAP1S. Interacts with UBE3A (via HECT domain). Expressed exclusively in testis. Expressed in ejaculated spermatozoa of germ cell. Expressed in the nuclei of spermatogonia, spermatocytes, and round spermatids, except elongated spermatids (at protein level).

The chain is Testis-specific basic protein Y 2 (BPY2) from Homo sapiens (Human).